Consider the following 553-residue polypeptide: ATP synthase F(1) complex subunit alpha, mitochondrial (553 aa).

The transit peptide at 1-43 directs the protein to the mitochondrion; the sequence is MLSVRVAAAVARALPRRAGLVSKNALGSSFIAARNLHASNSRL. The residue at position 44 (Q44) is a Pyrrolidone carboxylic acid. Phosphoserine is present on residues S53 and S65. Phosphoserine; alternate is present on S76. An O-linked (GlcNAc) serine; alternate glycan is attached at S76. S106 is modified (phosphoserine). An N6-acetyllysine mark is found at K123, K126, and K132. T134 is subject to Phosphothreonine. Position 161 is an N6-acetyllysine; alternate (K161). The residue at position 161 (K161) is an N6-succinyllysine; alternate. S166 carries the phosphoserine modification. K167 carries the N6-acetyllysine; alternate modification. K167 carries the N6-succinyllysine; alternate modification. Position 184 is a phosphoserine (S184). R204 is subject to Omega-N-methylarginine. ATP contacts are provided by Q215, G217, K218, T219, and S220. T219 contacts Mg(2+). 2 positions are modified to N6-acetyllysine; alternate: K230 and K239. An N6-succinyllysine; alternate mark is found at K230 and K239. K240 carries the N6-acetyllysine modification. N6-acetyllysine; alternate is present on residues K261 and K305. An N6-succinyllysine; alternate mark is found at K261 and K305. Residue D312 coordinates Mg(2+). Residue K427 is modified to N6-acetyllysine; alternate. K427 carries the N6-succinyllysine; alternate modification. Residue K434 is modified to N6-acetyllysine. Positions 473 and 475 each coordinate ATP. 4 positions are modified to N6-acetyllysine; alternate: K498, K506, K531, and K539. K498, K506, K531, and K539 each carry N6-succinyllysine; alternate. The residue at position 541 (K541) is an N6-acetyllysine.

Belongs to the ATPase alpha/beta chains family. Homotrimer. Component of the ATP synthase complex composed at least of ATP5F1A/subunit alpha, ATP5F1B/subunit beta, ATP5MC1/subunit c (homooctomer), MT-ATP6/subunit a, MT-ATP8/subunit 8, ATP5ME/subunit e, ATP5MF/subunit f, ATP5MG/subunit g, ATP5MK/subunit k, ATP5MJ/subunit j, ATP5F1C/subunit gamma, ATP5F1D/subunit delta, ATP5F1E/subunit epsilon, ATP5PF/subunit F6, ATP5PB/subunit b, ATP5PD/subunit d, ATP5PO/subunit OSCP. ATP synthase complex consists of a soluble F(1) head domain (subunits alpha(3) and beta(3)) - the catalytic core - and a membrane F(0) domain - the membrane proton channel (subunits c, a, 8, e, f, g, k and j). These two domains are linked by a central stalk (subunits gamma, delta, and epsilon) rotating inside the F1 region and a stationary peripheral stalk (subunits F6, b, d, and OSCP). Interacts with ATPAF2. Interacts with HRG; the interaction occurs on the surface of T-cells and alters the cell morphology when associated with concanavalin (in vitro). Interacts with PLG (angiostatin peptide); the interaction inhibits most of the angiogenic properties of angiostatin. Interacts with BLOC1S1. Interacts with BCL2L1 isoform BCL-X(L); the interaction mediates the association of BCL2L1 isoform BCL-X(L) with the mitochondrial membrane F(1)F(0) ATP synthase and enhances neurons metabolic efficiency. Interacts with CLN5 and PPT1. Interacts with S100A1; this interaction increases F1-ATPase activity. Interacts with ABCB7; this interaction allows the regulation of cellular iron homeostasis and cellular reactive oxygen species (ROS) levels in cardiomyocytes. In terms of processing, acetylated on lysine residues. BLOC1S1 is required for acetylation. In terms of tissue distribution, heart muscle (at protein level). Heart and liver.

It is found in the mitochondrion inner membrane. It localises to the cell membrane. In terms of biological role, subunit alpha, of the mitochondrial membrane ATP synthase complex (F(1)F(0) ATP synthase or Complex V) that produces ATP from ADP in the presence of a proton gradient across the membrane which is generated by electron transport complexes of the respiratory chain. ATP synthase complex consist of a soluble F(1) head domain - the catalytic core - and a membrane F(1) domain - the membrane proton channel. These two domains are linked by a central stalk rotating inside the F(1) region and a stationary peripheral stalk. During catalysis, ATP synthesis in the catalytic domain of F(1) is coupled via a rotary mechanism of the central stalk subunits to proton translocation. In vivo, can only synthesize ATP although its ATP hydrolase activity can be activated artificially in vitro. With the catalytic subunit beta (ATP5F1B), forms the catalytic core in the F(1) domain. Subunit alpha does not bear the catalytic high-affinity ATP-binding sites. The sequence is that of ATP synthase F(1) complex subunit alpha, mitochondrial from Bos taurus (Bovine).